Consider the following 555-residue polypeptide: Embryonic protein DC-8 (555 aa).

The span at 83–115 shows a compositional bias: basic and acidic residues; it reads RENTDYAYDKGREGGDVAAQKAEEAKEKAKMAK. Disordered regions lie at residues 83–118 and 132–151; these read RENT…KDTT and KAEE…KEKA. Tandem repeats lie at residues 97 to 114, 115 to 125, 126 to 140, 141 to 154, 155 to 176, 177 to 191, 192 to 205, 206 to 216, 217 to 237, 238 to 259, 260 to 281, 282 to 303, 304 to 325, 326 to 343, 344 to 358, 359 to 376, and 377 to 391. A 17 X approximate tandem repeats region spans residues 97–391; it reads GDVAAQKAEE…DTTVGKMTEL (295 aa). A disordered region spans residues 184–204; that stretch reads AAEAKDTTAQKAAEAKEKTGE. Residues 444–465 are compositionally biased toward basic and acidic residues; it reads LQEEGVKDEAKQRAEADRETAG. Residues 444–472 are disordered; the sequence is LQEEGVKDEAKQRAEADRETAGDRGSAAK.

This sequence belongs to the LEA type 4 family.

The protein localises to the cytoplasm. Its subcellular location is the secreted. The protein resides in the cell wall. Functionally, may play a role in late embryogeny. The protein is Embryonic protein DC-8 of Daucus carota (Wild carrot).